Reading from the N-terminus, the 610-residue chain is Calmegin (610 aa).

A signal peptide spans 1–19 (MHFQAFWLCLGLLFISINA). At 20–471 (EFMDDDVETE…LMAAAEGHPW (452 aa)) the chain is on the lumenal side. Position 128 is an N6-acetyllysine (Lys-128). A disulfide bridge links Cys-151 with Cys-185. A disordered region spans residues 258–338 (VPPIKPPKEI…KPDDWNEDTD (81 aa)). Residues 263 to 284 (PPKEIEDPNDKKPEEWDERAKI) are compositionally biased toward basic and acidic residues. 8 tandem repeats follow at residues 267–280 (IEDPNDKKPEEWDE), 284–297 (IPDPSAVKPEDWDE), 303–316 (IEDSSVVKPAGWLD), 322–335 (IPDPNAEKPDDWNE), 339–352 (GEWEAPQILNPACR), 356–369 (GEWKPPMIDNPKYK), 370–383 (GVWRPPLVDNPNYQ), and 384–397 (GIWSPRKIPNPDYF). Basic and acidic residues predominate over residues 317 to 332 (DEPKFIPDPNAEKPDD). Positions 317-350 (DEPKFIPDPNAEKPDDWNEDTDGEWEAPQILNPA) are interaction with PPIB. Cysteines 351 and 355 form a disulfide. Residues 472-492 (LWLIYLVTAGVPIALITSFCW) form a helical membrane-spanning segment. Residues 493–610 (PRKVKKKHKD…SVRKRRVRKD (118 aa)) are Cytoplasmic-facing. Residues 521-548 (QEEKEEKAALEKPMDLEEEKKQNDGEML) show a composition bias toward basic and acidic residues. Residues 521–610 (QEEKEEKAAL…SVRKRRVRKD (90 aa)) are disordered. Acidic residues predominate over residues 549 to 571 (EKEEESEPEEKSEEEIEIIEGQE). Residues Ser-560, Ser-576, Ser-579, Ser-581, Ser-591, Ser-594, and Ser-601 each carry the phosphoserine modification. Positions 601 to 610 (SVRKRRVRKD) are enriched in basic residues.

Belongs to the calreticulin family. In terms of assembly, interacts with PPIB. Interacts with ADAM2. Interacts with PDILT. Detected in testis (at protein level). Detected in testis.

It localises to the endoplasmic reticulum membrane. In terms of biological role, functions during spermatogenesis as a chaperone for a range of client proteins that are important for sperm adhesion onto the egg zona pellucida and for subsequent penetration of the zona pellucida. Required for normal sperm migration from the uterus into the oviduct. Required for normal male fertility. Binds calcium ions. The sequence is that of Calmegin (CLGN) from Homo sapiens (Human).